The following is a 304-amino-acid chain: Cell surface-binding protein OPG105 (304 aa).

Positions 1-235 (MPQQLSPINI…NDDTQVYYSG (235 aa)) constitute an Alpha-carbonic anhydrase domain. Topologically, residues 1–275 (MPQQLSPINI…YQKYIEGNKT (275 aa)) are virion surface. A helical membrane pass occupies residues 276–294 (FAIIAIVFVFILTAILFLM). Residues 295–304 (SRRYSREKQN) are Intravirion-facing.

This sequence belongs to the alpha-carbonic anhydrase family. In terms of assembly, homodimer; disulfide-linked. Post-translationally, apparently non-glycosylated.

Its subcellular location is the virion membrane. Functionally, binds to chondroitin sulfate on the cell surface to provide virion attachment to target cell. In Vaccinia virus (strain Copenhagen) (VACV), this protein is Cell surface-binding protein OPG105 (OPG105).